Here is a 283-residue protein sequence, read N- to C-terminus: Phosphatidylserine decarboxylase proenzyme (283 aa).

Catalysis depends on charge relay system; for autoendoproteolytic cleavage activity residues D88, H145, and S248. The Schiff-base intermediate with substrate; via pyruvic acid; for decarboxylase activity role is filled by S248. Position 248 is a pyruvic acid (Ser); by autocatalysis (S248).

This sequence belongs to the phosphatidylserine decarboxylase family. PSD-B subfamily. Prokaryotic type I sub-subfamily. Heterodimer of a large membrane-associated beta subunit and a small pyruvoyl-containing alpha subunit. Pyruvate serves as cofactor. In terms of processing, is synthesized initially as an inactive proenzyme. Formation of the active enzyme involves a self-maturation process in which the active site pyruvoyl group is generated from an internal serine residue via an autocatalytic post-translational modification. Two non-identical subunits are generated from the proenzyme in this reaction, and the pyruvate is formed at the N-terminus of the alpha chain, which is derived from the carboxyl end of the proenzyme. The autoendoproteolytic cleavage occurs by a canonical serine protease mechanism, in which the side chain hydroxyl group of the serine supplies its oxygen atom to form the C-terminus of the beta chain, while the remainder of the serine residue undergoes an oxidative deamination to produce ammonia and the pyruvoyl prosthetic group on the alpha chain. During this reaction, the Ser that is part of the protease active site of the proenzyme becomes the pyruvoyl prosthetic group, which constitutes an essential element of the active site of the mature decarboxylase.

The protein localises to the cell membrane. The catalysed reaction is a 1,2-diacyl-sn-glycero-3-phospho-L-serine + H(+) = a 1,2-diacyl-sn-glycero-3-phosphoethanolamine + CO2. It functions in the pathway phospholipid metabolism; phosphatidylethanolamine biosynthesis; phosphatidylethanolamine from CDP-diacylglycerol: step 2/2. Its function is as follows. Catalyzes the formation of phosphatidylethanolamine (PtdEtn) from phosphatidylserine (PtdSer). This is Phosphatidylserine decarboxylase proenzyme from Acidovorax ebreus (strain TPSY) (Diaphorobacter sp. (strain TPSY)).